The chain runs to 42 residues: Photosystem I reaction center subunit IX (42 aa).

A helical membrane pass occupies residues 7–27 (YLSVAPVLSTLWFGSLAGLLI).

This sequence belongs to the PsaJ family.

It is found in the plastid. It localises to the chloroplast thylakoid membrane. May help in the organization of the PsaE and PsaF subunits. The sequence is that of Photosystem I reaction center subunit IX from Lepidium virginicum (Virginia pepperweed).